A 252-amino-acid chain; its full sequence is MASLNQDQIKTLEQSRQRLVQLTRSLASLIGSLNQSDPLPSWSSLQSQAGIISNNLLSISEHLSDNKDLLSALVAYPGPSYPGRTQAPTLEQLLRTKLDPRVEDWVSRGRRAGASALEDRGALSESALAELWDWAPVEANQEARRRNWGGNFTLEEREMGIQNVVTGLRRQLEDEDEEESESESEEEGEGEEEEMEVVGVRRRSGAGAGLEFDIAAPTPGSRQQQQQKAAGPAVPLEDILRYMTTGIPPTQR.

Residues 6-30 (QDQIKTLEQSRQRLVQLTRSLASLI) adopt a coiled-coil conformation. A disordered region spans residues 170-252 (RQLEDEDEEE…MTTGIPPTQR (83 aa)). The span at 173-196 (EDEDEEESESESEEEGEGEEEEME) shows a compositional bias: acidic residues.

The protein belongs to the Mediator complex subunit 8 family. Component of the Mediator complex.

It localises to the nucleus. In terms of biological role, component of the Mediator complex, a coactivator involved in the regulated transcription of nearly all RNA polymerase II-dependent genes. Mediator functions as a bridge to convey information from gene-specific regulatory proteins to the basal RNA polymerase II transcription machinery. Mediator is recruited to promoters by direct interactions with regulatory proteins and serves as a scaffold for the assembly of a functional preinitiation complex with RNA polymerase II and the general transcription factors. This chain is Mediator of RNA polymerase II transcription subunit 8 (med8), found in Neosartorya fischeri (strain ATCC 1020 / DSM 3700 / CBS 544.65 / FGSC A1164 / JCM 1740 / NRRL 181 / WB 181) (Aspergillus fischerianus).